The sequence spans 132 residues: Small ribosomal subunit protein bS6 (132 aa).

Positions 94-132 (DAVTEESQLAKNADEKRARKATTRRPDRDDSDDNDHSED) are disordered. Positions 122 to 132 (DDSDDNDHSED) are enriched in acidic residues.

It belongs to the bacterial ribosomal protein bS6 family.

Binds together with bS18 to 16S ribosomal RNA. The chain is Small ribosomal subunit protein bS6 from Psychrobacter arcticus (strain DSM 17307 / VKM B-2377 / 273-4).